The primary structure comprises 317 residues: Melanocyte-stimulating hormone receptor (317 aa).

Residues 1–37 (MPMQGAQRRLLGSLNSTPTATPNLGLAANHTGAPCLE) lie on the Extracellular side of the membrane. N-linked (GlcNAc...) asparagine glycosylation occurs at Asn29. The helical transmembrane segment at 38-63 (VSIPDGLFLSLGLVSLVENVLVVAAI) threads the bilayer. Residues 64 to 72 (AKNRNLHSP) lie on the Cytoplasmic side of the membrane. The chain crosses the membrane as a helical span at residues 73-93 (MYCFICCLALSDLLVSGSNML). Topologically, residues 94-118 (EMAVILLLEAGALATRASVVQQLQN) are extracellular. A helical membrane pass occupies residues 119-140 (TIDVLTCSSMLCSLCFLGAIAV). Residues 141 to 163 (DRYVSIFYALRYHSIVTLPRARR) lie on the Cytoplasmic side of the membrane. A helical membrane pass occupies residues 164-183 (AIAAIWVASVLSSTLFIAYC). Residues 184 to 191 (DHAAVLLC) are Extracellular-facing. A helical membrane pass occupies residues 192-211 (LVVFFLAMLVLMAVLYVHML). The Cytoplasmic portion of the chain corresponds to 212 to 240 (ARACQHAQGITRLHKRQLPAHQGFGLRGA). Residues 241–266 (ATLTILLGIFFVCWGPFFLHLMLVVL) form a helical membrane-spanning segment. The Extracellular segment spans residues 267–279 (CPQHLTCSCIFKN). The helical transmembrane segment at 280–300 (FKVFLTLIICNTIIDPLIYAF) threads the bilayer. Over 301–317 (RSQELCRTLKEVLLCSW) the chain is Cytoplasmic. A lipid anchor (S-palmitoyl cysteine) is attached at Cys315.

It belongs to the G-protein coupled receptor 1 family. Interacts with MGRN1, but does not undergo MGRN1-mediated ubiquitination; this interaction competes with GNAS-binding and thus inhibits agonist-induced cAMP production. Interacts with OPN3; the interaction results in a decrease in MC1R-mediated cAMP signaling and ultimately a decrease in melanin production in melanocytes.

It localises to the cell membrane. Its function is as follows. Receptor for MSH (alpha, beta and gamma) and ACTH. The activity of this receptor is mediated by G proteins which activate adenylate cyclase. Mediates melanogenesis, the production of eumelanin (black/brown) and phaeomelanin (red/yellow), via regulation of cAMP signaling in melanocytes. The protein is Melanocyte-stimulating hormone receptor (MC1R) of Alouatta sara (Bolivian red howler monkey).